The chain runs to 238 residues: Large ribosomal subunit protein uL2 (238 aa).

Residues 199 to 238 form a disordered region; the sequence is PHGGGLHQSVSRPSTVSRNAPPGRKVGHIAARRTGRKEGA. The span at 206–216 shows a compositional bias: polar residues; sequence QSVSRPSTVSR. Positions 223–238 are enriched in basic residues; sequence KVGHIAARRTGRKEGA.

It belongs to the universal ribosomal protein uL2 family. In terms of assembly, part of the 50S ribosomal subunit. Forms a bridge to the 30S subunit in the 70S ribosome.

In terms of biological role, one of the primary rRNA binding proteins. Required for association of the 30S and 50S subunits to form the 70S ribosome, for tRNA binding and peptide bond formation. It has been suggested to have peptidyltransferase activity; this is somewhat controversial. Makes several contacts with the 16S rRNA in the 70S ribosome. The chain is Large ribosomal subunit protein uL2 from Sulfurisphaera tokodaii (strain DSM 16993 / JCM 10545 / NBRC 100140 / 7) (Sulfolobus tokodaii).